The sequence spans 581 residues: Cytosolic Fe-S cluster assembly factor nar-1 (581 aa).

Residues Cys-20, Cys-68, Cys-71, Cys-74, Cys-215, Cys-270, Cys-457, and Cys-461 each contribute to the [4Fe-4S] cluster site.

The protein belongs to the NARF family.

Functionally, component of the cytosolic Fe/S protein assembly machinery. Required for maturation of extramitochondrial Fe/S proteins. May play a role in the transfer of pre-assembled Fe/S clusters to target apoproteins. The sequence is that of Cytosolic Fe-S cluster assembly factor nar-1 (nar-1) from Neurospora crassa (strain ATCC 24698 / 74-OR23-1A / CBS 708.71 / DSM 1257 / FGSC 987).